Reading from the N-terminus, the 74-residue chain is Progonadoliberin-3 (74 aa).

The signal sequence occupies residues 1-15 (VRVVVLALVAQVTLS). The residue at position 16 (glutamine 16) is a Pyrrolidone carboxylic acid. Glycine amide is present on glycine 25.

Belongs to the GnRH family.

The protein localises to the secreted. In terms of biological role, stimulates the secretion of gonadotropins. The polypeptide is Progonadoliberin-3 (gnrh3) (Oncorhynchus tshawytscha (Chinook salmon)).